The chain runs to 348 residues: Quinone oxidoreductase-like protein 1 (348 aa).

It belongs to the zinc-containing alcohol dehydrogenase family. Quinone oxidoreductase subfamily. As to quaternary structure, component of the FERRY complex composed of five subunits, TBCK, PPP1R21, FERRY3, CRYZL1 and GATD1 with a ratio of 1:2:1:2:4, respectively.

It is found in the early endosome. Its function is as follows. Component of the FERRY complex (Five-subunit Endosomal Rab5 and RNA/ribosome intermediary). The FERRY complex directly interacts with mRNAs and RAB5A, and functions as a RAB5A effector involved in the localization and the distribution of specific mRNAs most likely by mediating their endosomal transport. The complex recruits mRNAs and ribosomes to early endosomes through direct mRNA-interaction. The chain is Quinone oxidoreductase-like protein 1 (Cryzl1) from Mus musculus (Mouse).